Consider the following 455-residue polypeptide: MTLTQEFDTIAAISTPLGEGAIAIVRLSGTDALKIAQSVYKGKNLAQVASHTINYGHIFEEERLVDEVMVSVMRAPKTFTREDIVEINTHGGIAVTQEILQLLLRNGARLAEPGEFTKRAFLNGRIDLAQAESVMDLIRAKTDKAANIAVKQLDGSLSKMINNIRQDILESLAQVEVNIDYPEYDDVETMTSQMLLEKTAHFEQLLENLLSTAKRGKILREGLKTAIIGRPNVGKSSLLNQLLREEKAIVTDIAGTTRDVITEFANIGGVPLELVDTAGIRETDDLVEAIGVERSKKALAEADLVLLVLDASLELTDKDLELLELSKNANRIVLLNKTDLPEKLDINQISGDFIRISALKNENLSAVEEKINQIFFAGEIEAKDATVLSNARHISLVEEALKALKEANNGLALGLPVDLIQVDVTRCWQLLGEITGEAAPDELITQLFSQFCLGK.

The (6S)-5-formyl-5,6,7,8-tetrahydrofolate site is built by R26, E86, and R125. A TrmE-type G domain is found at 222–376 (GLKTAIIGRP…VEEKINQIFF (155 aa)). N232 provides a ligand contact to K(+). Residues 232–237 (NVGKSS), 251–257 (TDIAGTT), and 276–279 (DTAG) contribute to the GTP site. S236 contacts Mg(2+). T251, I253, and T256 together coordinate K(+). T257 is a Mg(2+) binding site. K455 lines the (6S)-5-formyl-5,6,7,8-tetrahydrofolate pocket.

Belongs to the TRAFAC class TrmE-Era-EngA-EngB-Septin-like GTPase superfamily. TrmE GTPase family. In terms of assembly, homodimer. Heterotetramer of two MnmE and two MnmG subunits. K(+) is required as a cofactor.

Its subcellular location is the cytoplasm. Functionally, exhibits a very high intrinsic GTPase hydrolysis rate. Involved in the addition of a carboxymethylaminomethyl (cmnm) group at the wobble position (U34) of certain tRNAs, forming tRNA-cmnm(5)s(2)U34. In Lactococcus lactis subsp. cremoris (strain SK11), this protein is tRNA modification GTPase MnmE.